The following is a 494-amino-acid chain: Costunolide synthase (494 aa).

A helical membrane pass occupies residues 3–23 (PLTIVSLVVASLFLFAFWALS). Cysteine 432 is a binding site for heme.

It belongs to the cytochrome P450 family. Heme is required as a cofactor.

It localises to the membrane. It carries out the reaction germacra-1(10),4,11(13)-trien-12-oate + reduced [NADPH--hemoprotein reductase] + O2 = (+)-costunolide + oxidized [NADPH--hemoprotein reductase] + 2 H2O. In terms of biological role, hydroxylates germacrene A acid to 6-alpha-hydroxy-germacrne A acid, a precursor of sesquiterpene lactones that spontaneously undergoes a lactonization which yields costunolide. Costunolide can then spontaneously conjugate to glutathione or cysteine. This chain is Costunolide synthase (CYP71BL3), found in Cichorium intybus (Chicory).